The chain runs to 349 residues: MAGKKVCIVGSGNWGSAIAKIVGSNAGRLAHFDPRVTMWVFEEDIGGRKLTEIINTQHENVKYLPGHKLPPNVVAIPDVVQAATGADILVFVVPHQFIGKICDQLKGHLKANTIGISLIKGVDEGPNGLKLISEVIGERLGIPMSVLMGANIASEVAEEKFCETTIGCKDPAQGQLLKDLMQTPNFRITVVQEVDTVEICGALKNIVAVGAGFCDGLGFGDNTKAAVIRLGLMEMIAFAKLFCSGTVSSATFLESCGVADLITTCYGGRNRKVAEAFARTGKSIEQLEKEMLNGQKLQGPQTARELHSILQHKGLVDKFPLFTAVYKVCYEGQPVGEFIRCLQNHPEHM.

An NAD(+)-binding site is contributed by 10 to 15 (GSGNWG). Residue Lys120 participates in substrate binding. Ala153 contributes to the NAD(+) binding site. Phosphoserine is present on Ser154. The active-site Proton acceptor is Lys204. An NAD(+)-binding site is contributed by Arg269. 269–270 (RN) contacts substrate. Lys289 bears the N6-succinyllysine mark. Residues Lys296 and Gln298 each contribute to the NAD(+) site. Position 326 is a phosphotyrosine (Tyr326).

The protein belongs to the NAD-dependent glycerol-3-phosphate dehydrogenase family. In terms of assembly, homodimer.

It is found in the cytoplasm. The catalysed reaction is sn-glycerol 3-phosphate + NAD(+) = dihydroxyacetone phosphate + NADH + H(+). Has glycerol-3-phosphate dehydrogenase activity. The protein is Glycerol-3-phosphate dehydrogenase [NAD(+)], cytoplasmic of Mus musculus (Mouse).